Consider the following 498-residue polypeptide: ATP synthase subunit beta, chloroplastic (498 aa).

Residue 172–179 coordinates ATP; sequence GGAGVGKT.

Belongs to the ATPase alpha/beta chains family. As to quaternary structure, F-type ATPases have 2 components, CF(1) - the catalytic core - and CF(0) - the membrane proton channel. CF(1) has five subunits: alpha(3), beta(3), gamma(1), delta(1), epsilon(1). CF(0) has four main subunits: a(1), b(1), b'(1) and c(9-12).

Its subcellular location is the plastid. The protein localises to the chloroplast thylakoid membrane. It carries out the reaction ATP + H2O + 4 H(+)(in) = ADP + phosphate + 5 H(+)(out). In terms of biological role, produces ATP from ADP in the presence of a proton gradient across the membrane. The catalytic sites are hosted primarily by the beta subunits. The chain is ATP synthase subunit beta, chloroplastic from Nypa fruticans (Nypa palm).